Consider the following 310-residue polypeptide: uncharacterized protein (310 aa).

Positions 1–70 are disordered; it reads MAGNSQRRGA…ARGRTDETET (70 aa). The segment covering 49–62 has biased composition (basic residues); sequence AAKRAKAQQRRPAR. Residues Gly262, Val282, and Leu291 each contribute to the S-adenosyl-L-methionine site.

Belongs to the class IV-like SAM-binding methyltransferase superfamily. RNA methyltransferase TrmH family.

This is an uncharacterized protein from Mycobacterium ulcerans (strain Agy99).